The primary structure comprises 336 residues: Vacuolar protein sorting-associated protein 26B (336 aa).

A phosphoserine mark is found at Ser302, Ser304, and Ser319.

It belongs to the VPS26 family. As to quaternary structure, component of the heterotrimeric retromer cargo-selective complex (CSC), also described as vacuolar protein sorting VPS subcomplex (VPS,) formed by VPS26 (VPS26A or VPS26B), VPS29 and VPS35. The CSC has a highly elongated structure with VPS26 and VPS29 binding independently at opposite distal ends of VPS35 as central platform. The CSC is believed to associate with variable sorting nexins to form functionally distinct retromer complex variants. The originally described retromer complex (also called SNX-BAR retromer) is a pentamer containing the CSC and a heterodimeric membrane-deforming subcomplex formed between SNX1 or SNX2 and SNX5 or SNX6 (also called SNX-BAR subcomplex); the respective CSC and SNX-BAR subcomplexes associate with low affinity. The CSC associates with SNX3 to form a SNX3-retromer complex. The CSC associates with SNX27, the WASH complex and the SNX-BAR subcomplex to form the SNX27-retromer complex. Interacts with VPS29, VPS35, TBC1D5, GOLPH3, SNX27.

Its subcellular location is the cytoplasm. The protein localises to the membrane. It localises to the early endosome. It is found in the late endosome. In terms of biological role, acts as a component of the retromer cargo-selective complex (CSC). The CSC is believed to be the core functional component of retromer or respective retromer complex variants acting to prevent missorting of selected transmembrane cargo proteins into the lysosomal degradation pathway. The recruitment of the CSC to the endosomal membrane involves RAB7A and SNX3. The SNX-BAR retromer mediates retrograde transport of cargo proteins from endosomes to the trans-Golgi network (TGN) and is involved in endosome-to-plasma membrane transport for cargo protein recycling. The SNX3-retromer mediates the retrograde transport of WLS distinct from the SNX-BAR retromer pathway. The SNX27-retromer is believed to be involved in endosome-to-plasma membrane trafficking and recycling of a broad spectrum of cargo proteins. The CSC seems to act as recruitment hub for other proteins, such as the WASH complex and TBC1D5. May be involved in retrograde transport of SORT1 but not of IGF2R. Acts redundantly with VSP26A in SNX-27 mediated endocytic recycling of SLC2A1/GLUT1. The sequence is that of Vacuolar protein sorting-associated protein 26B (VPS26B) from Homo sapiens (Human).